Consider the following 252-residue polypeptide: Endonuclease NucS (252 aa).

The protein belongs to the NucS endonuclease family.

It localises to the cytoplasm. Its function is as follows. Cleaves both 3' and 5' ssDNA extremities of branched DNA structures. The polypeptide is Endonuclease NucS (Thermococcus kodakarensis (strain ATCC BAA-918 / JCM 12380 / KOD1) (Pyrococcus kodakaraensis (strain KOD1))).